We begin with the raw amino-acid sequence, 142 residues long: Hemoglobin subunit alpha (142 aa).

The Globin domain occupies 1-142; that stretch reads GLTAADKTLI…VEKALFETYR (142 aa). Residue His-59 coordinates O2. Residue His-88 coordinates heme b.

This sequence belongs to the globin family. Heterotetramer of two alpha chains and two beta chains (an easy dimerization is also reported). As to expression, red blood cells.

In terms of biological role, involved in oxygen transport from the lung to the various peripheral tissues. This chain is Hemoglobin subunit alpha (HBA), found in Latimeria chalumnae (Coelacanth).